A 1329-amino-acid polypeptide reads, in one-letter code: Putative protein tag-53 (1329 aa).

The EGF-like 1 domain maps to serine 65–aspartate 92. 5 disulfides stabilise this stretch: cysteine 66–cysteine 75, cysteine 70–cysteine 80, cysteine 82–cysteine 91, cysteine 94–cysteine 120, and cysteine 144–cysteine 166. One can recognise a CUB domain in the interval cysteine 94–asparagine 203. The N-linked (GlcNAc...) asparagine glycan is linked to asparagine 103. N-linked (GlcNAc...) asparagine glycans are attached at residues asparagine 197 and asparagine 208. EGF-like domains lie at arginine 204–glutamate 232 and valine 235–glutamine 270. Intrachain disulfides connect cysteine 205–cysteine 215, cysteine 209–cysteine 220, cysteine 222–cysteine 231, cysteine 236–cysteine 252, cysteine 247–cysteine 257, and cysteine 259–cysteine 269. Kelch repeat units follow at residues valine 302–asparagine 353, leucine 355–histidine 408, glutamate 416–tyrosine 463, alanine 471–glycine 518, methionine 520–glutamine 575, and leucine 577–phenylalanine 619. 6 N-linked (GlcNAc...) asparagine glycosylation sites follow: asparagine 324, asparagine 395, asparagine 447, asparagine 481, asparagine 529, and asparagine 555. The N-linked (GlcNAc...) asparagine glycan is linked to asparagine 820. Asparagine 832 carries N-linked (GlcNAc...) asparagine; atypical glycosylation. 2 N-linked (GlcNAc...) asparagine glycosylation sites follow: asparagine 833 and asparagine 934. Intrachain disulfides connect cysteine 945/cysteine 953, cysteine 947/cysteine 968, cysteine 971/cysteine 980, cysteine 983/cysteine 997, cysteine 1000/cysteine 1009, cysteine 1002/cysteine 1016, cysteine 1018/cysteine 1028, and cysteine 1031/cysteine 1045. Laminin EGF-like domains are found at residues cysteine 945–proline 999 and cysteine 1000–tyrosine 1047. One can recognise an EGF-like 4 domain in the interval threonine 952–serine 998. N-linked (GlcNAc...) asparagine glycosylation occurs at asparagine 973. N-linked (GlcNAc...) asparagine glycosylation is found at asparagine 1066, asparagine 1102, and asparagine 1147. Residues valine 1176 to leucine 1196 traverse the membrane as a helical segment. At tryptophan 1197–aspartate 1329 the chain is on the cytoplasmic side.

The protein localises to the membrane. The sequence is that of Putative protein tag-53 (tag-53) from Caenorhabditis elegans.